Reading from the N-terminus, the 276-residue chain is Phosphatidylglycerol--prolipoprotein diacylglyceryl transferase (276 aa).

The next 7 helical transmembrane spans lie at 17-37, 59-79, 95-115, 129-149, 176-196, 202-222, and 237-257; these read LAIRWYGLMYLAGFIMFLWFG, MLFFGVMGVILGGRLGYVLFY, WEGGMAFHGGFLGVLVAMWLF, FIAPMIPCGLAAGRIGNFING, SQLYQFAGEGVALFIILWLFA, MGAVSGVFLIGYGGFRFAAEF, and LSMGQWLSLPMILIGIAMVVW. A 1,2-diacyl-sn-glycero-3-phospho-(1'-sn-glycerol) is bound at residue arginine 142.

It belongs to the Lgt family.

The protein resides in the cell inner membrane. The enzyme catalyses L-cysteinyl-[prolipoprotein] + a 1,2-diacyl-sn-glycero-3-phospho-(1'-sn-glycerol) = an S-1,2-diacyl-sn-glyceryl-L-cysteinyl-[prolipoprotein] + sn-glycerol 1-phosphate + H(+). It participates in protein modification; lipoprotein biosynthesis (diacylglyceryl transfer). Its function is as follows. Catalyzes the transfer of the diacylglyceryl group from phosphatidylglycerol to the sulfhydryl group of the N-terminal cysteine of a prolipoprotein, the first step in the formation of mature lipoproteins. In Cupriavidus pinatubonensis (strain JMP 134 / LMG 1197) (Cupriavidus necator (strain JMP 134)), this protein is Phosphatidylglycerol--prolipoprotein diacylglyceryl transferase.